The sequence spans 318 residues: Pyrimidine-specific ribonucleoside hydrolase RihA (318 aa).

Residue His-240 is part of the active site.

Belongs to the IUNH family. RihA subfamily.

Its function is as follows. Hydrolyzes cytidine or uridine to ribose and cytosine or uracil, respectively. This is Pyrimidine-specific ribonucleoside hydrolase RihA from Shewanella sp. (strain MR-7).